Consider the following 768-residue polypeptide: Cullin-3-B (768 aa).

Residues 677–698 (VAAKQGESDPERKETRQKVDDD) form a disordered region. The segment covering 682–698 (GESDPERKETRQKVDDD) has biased composition (basic and acidic residues). Residues 698-760 (DRKHEIEAAI…REYLARTPED (63 aa)) enclose the Cullin neddylation domain. A Glycyl lysine isopeptide (Lys-Gly) (interchain with G-Cter in NEDD8) cross-link involves residue Lys-712.

It belongs to the cullin family. In terms of assembly, component of multiple BCR (BTB-CUL3-RBX1) E3 ubiquitin-protein ligase complexes formed of cul3, rbx1 and a variable BTB domain-containing protein acting as both, adapter to cullin and substrate recognition subunit. Interacts with btbd6. Neddylated. Attachment of NEDD8 is required for the E3 ubiquitin-protein ligase activity of the SCF-like complex.

It localises to the nucleus. It functions in the pathway protein modification; protein ubiquitination. Functionally, probable core component of cullin-based SCF-like E3 ubiquitin-protein ligase complexes which mediate the ubiquitination and subsequent proteasomal degradation of target proteins. The E3 ubiquitin-protein ligase activity of the complex is dependent on the neddylation of the cullin subunit. Involved in ER-Golgi transport by regulating the size of COPII coats, thereby playing a key role in collagen export, which is required for embryonic stem (ES) cells division. May play a role in the regulation of mittotic entry via ubiquitination of aurka. The polypeptide is Cullin-3-B (cul3b) (Xenopus laevis (African clawed frog)).